The sequence spans 404 residues: Glucose-1-phosphate adenylyltransferase (404 aa).

Alpha-D-glucose 1-phosphate-binding positions include Y99, G164, 179 to 180, and S197; that span reads EK.

The protein belongs to the bacterial/plant glucose-1-phosphate adenylyltransferase family. As to quaternary structure, homotetramer.

It catalyses the reaction alpha-D-glucose 1-phosphate + ATP + H(+) = ADP-alpha-D-glucose + diphosphate. The protein operates within glycan biosynthesis; glycogen biosynthesis. Its function is as follows. Involved in the biosynthesis of ADP-glucose, a building block required for the elongation reactions to produce glycogen. Catalyzes the reaction between ATP and alpha-D-glucose 1-phosphate (G1P) to produce pyrophosphate and ADP-Glc. This is Glucose-1-phosphate adenylyltransferase from Rhodococcus opacus (strain B4).